We begin with the raw amino-acid sequence, 55 residues long: Rubredoxin-1 (55 aa).

One can recognise a Rubredoxin-like domain in the interval 1–54; the sequence is MKKWQCVVCGLIYDEAKGWPEEGIEAGTRWEDVPEDWLCPDCGVGKLDFEMIEI. Fe cation-binding residues include cysteine 6, cysteine 9, cysteine 39, and cysteine 42.

It belongs to the rubredoxin family. It depends on Fe(3+) as a cofactor.

The protein resides in the cytoplasm. Its pathway is hydrocarbon metabolism; alkane degradation. Involved in the hydrocarbon hydroxylating system, which transfers electrons from NADH to rubredoxin reductase and then through rubredoxin to alkane 1 monooxygenase. The sequence is that of Rubredoxin-1 (rubA1) from Pseudomonas aeruginosa (strain ATCC 15692 / DSM 22644 / CIP 104116 / JCM 14847 / LMG 12228 / 1C / PRS 101 / PAO1).